A 378-amino-acid polypeptide reads, in one-letter code: Virion membrane protein A16 (378 aa).

Gly2 is lipidated: N-myristoyl glycine; by host. Topologically, residues 2–342 are virion surface; the sequence is GAAVTLNRIK…VVKDKIKLPT (341 aa). Residues 343-363 traverse the membrane as a helical; Signal-anchor for type II membrane protein segment; the sequence is WLGAAITLVVISVIFYFISIY. The Intravirion portion of the chain corresponds to 364–378; that stretch reads SRPKIKTNDINVRRR.

Belongs to the poxviridae A16/G9/J5 family. In terms of assembly, part of a stable entry-fusion complex (EFC) which is at least composed of proteins A16, A21, A28, G3, G9, H2, J5, and L5. Formation of the viral membrane is necessary for the assembly of the complex. Interacts with G9. In terms of processing, most cysteines are linked by disulfide bonds. They are created by the viral disulfide bond formation pathway, a poxvirus-specific redox pathway that operates on the cytoplasmic side of the MV membranes.

The protein localises to the virion membrane. In terms of biological role, envelope protein part of the entry-fusion complex responsible for the virus membrane fusion with host cell membrane during virus entry. Also plays a role in cell-cell fusion (syncytium formation). This Oryctolagus cuniculus (Rabbit) protein is Virion membrane protein A16.